The following is a 562-amino-acid chain: Gut esterase 1 (562 aa).

Residues 1-16 (MRVLLASLLIFGACWA) form the signal peptide. An intrachain disulfide couples cysteine 75 to cysteine 93. Serine 199 serves as the catalytic Acyl-ester intermediate. A disulfide bond links cysteine 251 and cysteine 259. Residues glutamate 320 and histidine 451 each act as charge relay system in the active site. The Prevents secretion from ER signature appears at 559–562 (KDEL).

This sequence belongs to the type-B carboxylesterase/lipase family. Expressed only in the intestine.

The protein localises to the endoplasmic reticulum lumen. It carries out the reaction a carboxylic ester + H2O = an alcohol + a carboxylate + H(+). The sequence is that of Gut esterase 1 (ges-1) from Caenorhabditis briggsae.